A 492-amino-acid chain; its full sequence is Solute carrier family 2, facilitated glucose transporter member 1 (492 aa).

Residue Met1 is modified to N-acetylmethionine. Topologically, residues 1-11 (MEPSSKKVTGR) are cytoplasmic. A helical membrane pass occupies residues 12–33 (LMLAVGGAVLGSLQFGYNTGVI). Residues 34–66 (NAPQKVIEEFYNQTWIHRYGERILPTTLTTLWS) are Extracellular-facing. N-linked (GlcNAc...) asparagine glycosylation is present at Asn45. A helical transmembrane segment spans residues 67–87 (LSVAIFSVGGMIGSFSVGLFV). The Cytoplasmic portion of the chain corresponds to 88–90 (NRF). The helical transmembrane segment at 91–112 (GRRNSMLMMNLLAFVSAVLMGF) threads the bilayer. The Extracellular portion of the chain corresponds to 113-120 (SKLAKSFE). A helical membrane pass occupies residues 121–144 (MLILGRFIIGVYCGLTTGFVPMYV). Over 145 to 155 (GEVSPTALRGA) the chain is Cytoplasmic. Residues 156–176 (LGTLHQLGIVVGILIAQVFGL) traverse the membrane as a helical segment. Gln161 is a D-glucose binding site. The Extracellular segment spans residues 177–185 (DSIMGNEDL). The chain crosses the membrane as a helical span at residues 186 to 206 (WPLLLSVIFVPALLQCIVLPL). At 207–271 (CPESPRFLLI…LFRSPAYRQP (65 aa)) the chain is on the cytoplasmic side. The residue at position 226 (Ser226) is a Phosphoserine. A helical transmembrane segment spans residues 272–293 (ILSAVVLQLSQQLSGINAVFYY). Residues 282–283 (QQ) and Asn288 each bind D-glucose. At 294–306 (STSIFEKAGVQQP) the chain is on the extracellular side. Residues 307 to 328 (VYATIGSGIVNTAFTVVSLFVV) traverse the membrane as a helical segment. Asn317 is a D-glucose binding site. Residues 329 to 334 (ERAGRR) lie on the Cytoplasmic side of the membrane. A helical transmembrane segment spans residues 335-355 (TLHLIGLAGMAACAVLMTIAL). Residues 356 to 365 (ALLEQLPWMS) are Extracellular-facing. Residues 366–388 (YLSIVAIFGFVAFFEVGPGPIPW) form a helical membrane-spanning segment. D-glucose is bound by residues Glu380 and Trp388. Residues 389 to 401 (FIVAELFSQGPRP) are Cytoplasmic-facing. Residues 402-422 (AAVAVAGFSNWTSNFIVGMCF) traverse the membrane as a helical segment. The Extracellular portion of the chain corresponds to 423 to 429 (QYVEQLC). The helical transmembrane segment at 430–450 (GPYVFIIFTVLLVLFFIFTYF) threads the bilayer. The Cytoplasmic portion of the chain corresponds to 451–492 (KVPETKGRTFDEIASGFRQGGASQSDKTPEELFHPLGADSQV). Ser465 is subject to Phosphoserine. The tract at residues 468–492 (RQGGASQSDKTPEELFHPLGADSQV) is disordered. Phosphothreonine is present on Thr478. A Phosphoserine modification is found at Ser490.

It belongs to the major facilitator superfamily. Sugar transporter (TC 2.A.1.1) family. Glucose transporter subfamily. As to quaternary structure, found in a complex with ADD2, DMTN and SLC2A1. Interacts (via C-terminus cytoplasmic region) with DMTN. Interacts with SNX27; the interaction is required when endocytosed to prevent degradation in lysosomes and promote recycling to the plasma membrane. Interacts with GIPC (via PDZ domain). Interacts with STOM. Interacts with SGTA (via Gln-rich region). Interacts with BSG. Interacts with SMIM43; the interaction may promote SLC2A1-mediated glucose transport to meet the energy needs of mesendoderm differentiation. In terms of processing, phosphorylation at Ser-226 by PKC promotes glucose uptake by increasing cell membrane localization.

It localises to the cell membrane. The protein resides in the photoreceptor inner segment. The enzyme catalyses D-glucose(out) = D-glucose(in). The uptake of glucose is inhibited by cytochalasin B. Glucose uptake is increased in response to phorbol ester 12-O-tetradecanoylphorbol-13-acetate (TPA) treatment: TPA-induced glucose uptake requires phosphorylation at Ser-226. Functionally, facilitative glucose transporter, which is responsible for constitutive or basal glucose uptake. Has a very broad substrate specificity; can transport a wide range of aldoses including both pentoses and hexoses. Most important energy carrier of the brain: present at the blood-brain barrier and assures the energy-independent, facilitative transport of glucose into the brain. In association with BSG and NXNL1, promotes retinal cone survival by increasing glucose uptake into photoreceptors. Required for mesendoderm differentiation. This chain is Solute carrier family 2, facilitated glucose transporter member 1, found in Oryctolagus cuniculus (Rabbit).